The primary structure comprises 604 residues: UvrABC system protein C (604 aa).

Positions 14–91 constitute a GIY-YIG domain; that stretch reads ESPGVYRMLD…IKEQRPPYNI (78 aa). In terms of domain architecture, UVR spans 202–237; the sequence is EQVTAQLTRDMETASQALDFEEAARLRDQIQQLRRL. The segment at 538 to 557 is disordered; sequence GHRQQRDKQRRTSTLQDIPG.

This sequence belongs to the UvrC family. As to quaternary structure, interacts with UvrB in an incision complex.

The protein localises to the cytoplasm. Its function is as follows. The UvrABC repair system catalyzes the recognition and processing of DNA lesions. UvrC both incises the 5' and 3' sides of the lesion. The N-terminal half is responsible for the 3' incision and the C-terminal half is responsible for the 5' incision. This chain is UvrABC system protein C, found in Chromohalobacter salexigens (strain ATCC BAA-138 / DSM 3043 / CIP 106854 / NCIMB 13768 / 1H11).